The chain runs to 787 residues: Transcriptional corepressor LEUNIG_HOMOLOG (787 aa).

The required for SEU-binding stretch occupies residues 1–88 (MAQSNWEADK…IEAQQGKAKE (88 aa)). The region spanning 8 to 40 (ADKMLDVYIYDYLVKKKLHNTAKSFMTEGKVSP) is the LisH domain. A coiled-coil region spans residues 77 to 106 (AYIEAQQGKAKEQQMQIQQLQMMRQAQMQR). The segment at 299–413 (NMTNSPMYGG…TPSTHTPVDG (115 aa)) is disordered. Composition is skewed to low complexity over residues 336–346 (SIGSPMQSSSS) and 355–372 (QQSS…QSQQ). The span at 380–409 (PSSSGPANSTGTGNTVGPSNSQPSTPSTHT) shows a compositional bias: polar residues. WD repeat units lie at residues 508 to 547 (KSAS…VEST), 550 to 589 (EHAH…YFLR), 593 to 633 (GHAA…VRAV), 635 to 671 (GAST…KRVN), 675 to 715 (GHSS…HELS), 717 to 755 (SGNK…CMTV), and 757 to 787 (GHEC…KIWK).

In terms of assembly, forms corepressor complexes with SLK1 and SLK2; LUH is the transcription repressor subunit and SLK1 and SLK2 the specific DNA-binding adapters. Interacts with SEU. Binds to YAB3, YAB5 and YAB1/FIL; these complexes promote adaxial cell identity in leaves as well as embryonic shoot apical meristem (SAM) initiation and postembryonic SAM maintenance. Expressed in roots, stems, leaves, seedlings, apex, flowers, siliques, flower organs and seeds (including seed coat).

The protein resides in the nucleus. In terms of biological role, transcription repressor subunit of the SEU-SLK1 and SEU-SLK2 transcriptional corepressor of abiotic stress (e.g. salt and osmotic stress) response genes, by means of an epigenetic process involving histone modification (e.g. H3K9 and H3K14 acetylation), probably by recruiting HDAC, to facilitate the condensation of chromatin thus preventing transcription at the target genes. Can also act as a transcription activator. Implicated in embryo and floral development. Involved in post-synthesis cell wall modifications necessary for mucilage extrusion from seeds upon imbibition, probably by promoting the expression of genes required for mucilage maturation (e.g. MUM2). Regulates the maintenance on leaf polarity and meristem activity as well as the initiation of embryonic shoot apical meristem (SAM) development. The polypeptide is Transcriptional corepressor LEUNIG_HOMOLOG (Arabidopsis thaliana (Mouse-ear cress)).